A 145-amino-acid chain; its full sequence is Secreted RxLR effector protein 43 (145 aa).

The N-terminal stretch at 1 to 20 (MKVTMALAALCVALQAPCIG) is a signal peptide. The RxLR motif lies at 31-34 (RHLR).

Belongs to the RxLR effector family.

It is found in the secreted. Its subcellular location is the host nucleus. It localises to the host cytoplasm. Its function is as follows. Secreted effector that completely suppresses the host cell death induced by cell death-inducing proteins. The sequence is that of Secreted RxLR effector protein 43 from Plasmopara viticola (Downy mildew of grapevine).